An 83-amino-acid chain; its full sequence is Large ribosomal subunit protein bL27 (83 aa).

Residues 1-25 (MAHKKGQGASRNGRDSESKRLGLKV) are disordered.

The protein belongs to the bacterial ribosomal protein bL27 family.

This Chlamydia muridarum (strain MoPn / Nigg) protein is Large ribosomal subunit protein bL27.